Here is a 199-residue protein sequence, read N- to C-terminus: Probable NADH dehydrogenase [ubiquinone] iron-sulfur protein 7, mitochondrial (199 aa).

[4Fe-4S] cluster is bound by residues C74, C75, C139, and C169.

The protein belongs to the complex I 20 kDa subunit family. Complex I is composed of 45 different subunits This is a component of the iron-sulfur (IP) fragment of the enzyme. The cofactor is [4Fe-4S] cluster.

It is found in the mitochondrion. It carries out the reaction a ubiquinone + NADH + 5 H(+)(in) = a ubiquinol + NAD(+) + 4 H(+)(out). Functionally, core subunit of the mitochondrial membrane respiratory chain NADH dehydrogenase (Complex I) that is believed to belong to the minimal assembly required for catalysis. Complex I functions in the transfer of electrons from NADH to the respiratory chain. The immediate electron acceptor for the enzyme is believed to be ubiquinone. This chain is Probable NADH dehydrogenase [ubiquinone] iron-sulfur protein 7, mitochondrial (nduf-7), found in Caenorhabditis elegans.